Consider the following 301-residue polypeptide: Bifunctional protein FolD (301 aa).

NADP(+) is bound by residues 169-171 (GRS), Ser-194, and Ile-235.

This sequence belongs to the tetrahydrofolate dehydrogenase/cyclohydrolase family. As to quaternary structure, homodimer.

The catalysed reaction is (6R)-5,10-methylene-5,6,7,8-tetrahydrofolate + NADP(+) = (6R)-5,10-methenyltetrahydrofolate + NADPH. The enzyme catalyses (6R)-5,10-methenyltetrahydrofolate + H2O = (6R)-10-formyltetrahydrofolate + H(+). It functions in the pathway one-carbon metabolism; tetrahydrofolate interconversion. In terms of biological role, catalyzes the oxidation of 5,10-methylenetetrahydrofolate to 5,10-methenyltetrahydrofolate and then the hydrolysis of 5,10-methenyltetrahydrofolate to 10-formyltetrahydrofolate. The protein is Bifunctional protein FolD of Gloeothece citriformis (strain PCC 7424) (Cyanothece sp. (strain PCC 7424)).